A 507-amino-acid polypeptide reads, in one-letter code: 3-oxosteroid 1-dehydrogenase (507 aa).

Position 9–38 (9–38 (DLLVVGSGGGALTGAYTAAAQGLTTIVLEK)) interacts with FAD. The tract at residues 299–385 (GLVVDSPGSV…LPRPDYRPER (87 aa)) is disordered.

It belongs to the FAD-dependent oxidoreductase 2 family. 3-oxosteroid dehydrogenase subfamily. It depends on FAD as a cofactor.

Its subcellular location is the cell membrane. It catalyses the reaction a 3-oxosteroid + A = a 3-oxo-Delta(1)-steroid + AH2. It participates in lipid metabolism; steroid degradation. Functionally, catalyzes the elimination of the C-1 and C-2 hydrogen atoms of the A-ring from the polycyclic ring structure of 3-ketosteroids. The sequence is that of 3-oxosteroid 1-dehydrogenase from Rhodococcus opacus (Nocardia opaca).